A 156-amino-acid chain; its full sequence is uncharacterized protein (156 aa).

This is an uncharacterized protein from Haemophilus influenzae (strain ATCC 51907 / DSM 11121 / KW20 / Rd).